A 529-amino-acid polypeptide reads, in one-letter code: Chaperonin GroEL, chloroplastic (529 aa).

Residues 29 to 32 (TLGP), 86 to 90 (DGTTT), G414, 480 to 482 (DAA), and D496 each bind ATP.

Belongs to the chaperonin (HSP60) family. In terms of assembly, forms a cylinder of 14 subunits composed of two heptameric rings stacked back-to-back. Interacts with the co-chaperonin GroES.

It is found in the plastid. Its subcellular location is the chloroplast. It catalyses the reaction ATP + H2O + a folded polypeptide = ADP + phosphate + an unfolded polypeptide.. In terms of biological role, together with its co-chaperonin GroES, plays an essential role in assisting protein folding. The GroEL-GroES system forms a nano-cage that allows encapsulation of the non-native substrate proteins and provides a physical environment optimized to promote and accelerate protein folding. This chain is Chaperonin GroEL, chloroplastic, found in Guillardia theta (Cryptophyte).